Consider the following 36-residue polypeptide: Glycine-rich protein GWK (36 aa).

Residues 1–36 (YKRGGGGWGGGGGWKGGGGGGGGWKGGGGGGKGGGG) are disordered.

Possesses antifungal activity against a number of phytopathogenic fungi, including H.sativum and F.culmorum. This Cucumis melo (Muskmelon) protein is Glycine-rich protein GWK.